We begin with the raw amino-acid sequence, 431 residues long: Enolase (431 aa).

Gln167 contributes to the (2R)-2-phosphoglycerate binding site. Residue Glu209 is the Proton donor of the active site. Asp246, Glu287, and Asp314 together coordinate Mg(2+). Positions 339, 368, 369, and 390 each coordinate (2R)-2-phosphoglycerate. Residue Lys339 is the Proton acceptor of the active site.

It belongs to the enolase family. Mg(2+) serves as cofactor.

Its subcellular location is the cytoplasm. The protein localises to the secreted. It is found in the cell surface. It catalyses the reaction (2R)-2-phosphoglycerate = phosphoenolpyruvate + H2O. It functions in the pathway carbohydrate degradation; glycolysis; pyruvate from D-glyceraldehyde 3-phosphate: step 4/5. Its function is as follows. Catalyzes the reversible conversion of 2-phosphoglycerate (2-PG) into phosphoenolpyruvate (PEP). It is essential for the degradation of carbohydrates via glycolysis. The sequence is that of Enolase from Prochlorococcus marinus (strain MIT 9303).